The following is a 612-amino-acid chain: Mineralocorticoid receptor (612 aa).

Residues 1-228 are modulating; sequence GNEIADSTVS…STGPSRPSKV (228 aa). Zn(2+) contacts are provided by cysteine 229, cysteine 232, cysteine 246, cysteine 249, cysteine 269, cysteine 275, cysteine 285, and cysteine 288. 2 NR C4-type zinc fingers span residues 229 to 249 and 269 to 293; these read CLVC…CGSC and CAGR…LQKC. Residues 229–298 constitute a DNA-binding region (nuclear receptor); the sequence is CLVCGDEASG…RLQKCLQAGM (70 aa). Residues 299–349 are hinge; sequence NLGARKSKKLGKLKGVHEEHPQQPLQQTPTASPKEDTTLTSSSKEPSANSN. The interval 310–348 is disordered; the sequence is KLKGVHEEHPQQPLQQTPTASPKEDTTLTSSSKEPSANS. Residues 339–348 are compositionally biased toward low complexity; it reads SSSKEPSANS. An NR LBD domain is found at 350 to 592; it reads SLVPLISAVS…EFPAMLVEII (243 aa). Residues asparagine 398 and glutamine 404 each coordinate 21-hydroxyprogesterone. Aldosterone is bound by residues asparagine 398 and glutamine 404. Residues asparagine 398 and glutamine 404 each coordinate progesterone. The interval 410–413 is important for coactivator binding; that stretch reads KWAK. The 21-hydroxyprogesterone site is built by arginine 445 and threonine 573. Arginine 445 and threonine 573 together coordinate aldosterone. Progesterone contacts are provided by arginine 445 and threonine 573.

It belongs to the nuclear hormone receptor family. NR3 subfamily.

It localises to the cytoplasm. Its subcellular location is the nucleus. Receptor for both mineralocorticoids (MC) such as aldosterone and glucocorticoids (GC) such as corticosterone or cortisol. Binds to mineralocorticoid response elements (MRE) and transactivates target genes. The effect of MC is to increase ion and water transport and thus raise extracellular fluid volume and blood pressure and lower potassium levels. The protein is Mineralocorticoid receptor (nr3c2) of Xenopus laevis (African clawed frog).